A 302-amino-acid chain; its full sequence is Quinolinate synthase (302 aa).

Iminosuccinate is bound by residues H25 and S42. A [4Fe-4S] cluster-binding site is contributed by C87. Residues 113-115 (YVN) and S130 each bind iminosuccinate. C172 lines the [4Fe-4S] cluster pocket. Iminosuccinate is bound by residues 198 to 200 (HPE) and T215. [4Fe-4S] cluster is bound at residue C260.

The protein belongs to the quinolinate synthase family. Type 2 subfamily. Requires [4Fe-4S] cluster as cofactor.

It is found in the cytoplasm. The catalysed reaction is iminosuccinate + dihydroxyacetone phosphate = quinolinate + phosphate + 2 H2O + H(+). It functions in the pathway cofactor biosynthesis; NAD(+) biosynthesis; quinolinate from iminoaspartate: step 1/1. In terms of biological role, catalyzes the condensation of iminoaspartate with dihydroxyacetone phosphate to form quinolinate. In Methanoregula boonei (strain DSM 21154 / JCM 14090 / 6A8), this protein is Quinolinate synthase.